The following is a 725-amino-acid chain: Methionine--tRNA ligase (725 aa).

The short motif at 27-37 is the 'HIGH' region element; it reads PYANGQIHIGH. Zn(2+) is bound by residues Cys-158, Cys-161, Cys-171, and Cys-174. The 'KMSKS' region motif lies at 348 to 352; that stretch reads KMSKS. Lys-351 is an ATP binding site. The 107-residue stretch at 619–725 folds into the tRNA-binding domain; sequence DFAKIDLRIA…SGAKPGMRVK (107 aa).

Belongs to the class-I aminoacyl-tRNA synthetase family. MetG type 1 subfamily. As to quaternary structure, homodimer. Zn(2+) is required as a cofactor.

Its subcellular location is the cytoplasm. The enzyme catalyses tRNA(Met) + L-methionine + ATP = L-methionyl-tRNA(Met) + AMP + diphosphate. Is required not only for elongation of protein synthesis but also for the initiation of all mRNA translation through initiator tRNA(fMet) aminoacylation. The chain is Methionine--tRNA ligase from Burkholderia pseudomallei (strain 1710b).